We begin with the raw amino-acid sequence, 175 residues long: MERLPYEIVSTIFRKAILHYVLIRGTTYPQSLAENLNISKGLASSFLRLCSALNIMKRERAGHKVLYSFTSKGLAILKRLAPEIFDLSFSSVFEQLPKKKIATKYYPVDKIGFEISWKEDKLGGIVFSFFDSNGEHLGDVFRSNKGYWWCVICQSDTCKHIDYLKRLYKTLKNQD.

The signal sequence occupies residues 1 to 33; the sequence is MERLPYEIVSTIFRKAILHYVLIRGTTYPQSLA.

This is an uncharacterized protein from Methanocaldococcus jannaschii (strain ATCC 43067 / DSM 2661 / JAL-1 / JCM 10045 / NBRC 100440) (Methanococcus jannaschii).